A 215-amino-acid polypeptide reads, in one-letter code: MKVAVNGNPLIGLYAKVSEEYAVVGVNHEPLIDAIQEKLDVDVIVTKIAGSELVGAMMALNSRGAVVSDQVLSSELRELEKSLDVLVIETPMTCFGNNLLINDRGGIANPEMESSVVEKVADFMDIELVKGTVGGIKTVGMAAVVTNRGGLANPNINEWEAKKLQEVAGVEVLTGTVNFGTDMVGSGLVANSKGYVVGRDTTGFELGIVEEALFP.

Belongs to the eIF-6 family.

Its function is as follows. Binds to the 50S ribosomal subunit and prevents its association with the 30S ribosomal subunit to form the 70S initiation complex. This is Translation initiation factor 6 from Archaeoglobus fulgidus (strain ATCC 49558 / DSM 4304 / JCM 9628 / NBRC 100126 / VC-16).